Consider the following 1407-residue polypeptide: DNA-directed RNA polymerase subunit beta' (1407 aa).

Positions 70, 72, 85, and 88 each coordinate Zn(2+). Residues D460, D462, and D464 each coordinate Mg(2+). Residues C814, C888, C895, and C898 each coordinate Zn(2+).

This sequence belongs to the RNA polymerase beta' chain family. The RNAP catalytic core consists of 2 alpha, 1 beta, 1 beta' and 1 omega subunit. When a sigma factor is associated with the core the holoenzyme is formed, which can initiate transcription. Mg(2+) is required as a cofactor. The cofactor is Zn(2+).

The catalysed reaction is RNA(n) + a ribonucleoside 5'-triphosphate = RNA(n+1) + diphosphate. DNA-dependent RNA polymerase catalyzes the transcription of DNA into RNA using the four ribonucleoside triphosphates as substrates. In Salmonella paratyphi B (strain ATCC BAA-1250 / SPB7), this protein is DNA-directed RNA polymerase subunit beta'.